Reading from the N-terminus, the 204-residue chain is dTTP/UTP pyrophosphatase (204 aa).

Asp-68 serves as the catalytic Proton acceptor.

The protein belongs to the Maf family. YhdE subfamily. It depends on a divalent metal cation as a cofactor.

The protein resides in the cytoplasm. The catalysed reaction is dTTP + H2O = dTMP + diphosphate + H(+). The enzyme catalyses UTP + H2O = UMP + diphosphate + H(+). Its function is as follows. Nucleoside triphosphate pyrophosphatase that hydrolyzes dTTP and UTP. May have a dual role in cell division arrest and in preventing the incorporation of modified nucleotides into cellular nucleic acids. In Thermotoga maritima (strain ATCC 43589 / DSM 3109 / JCM 10099 / NBRC 100826 / MSB8), this protein is dTTP/UTP pyrophosphatase.